We begin with the raw amino-acid sequence, 130 residues long: Small ribosomal subunit protein uS9 (130 aa).

Residues 105–130 (TRDPRMKERKKYGLKGARRAPQFSKR) form a disordered region. A compositionally biased stretch (basic residues) spans 111–130 (KERKKYGLKGARRAPQFSKR).

This sequence belongs to the universal ribosomal protein uS9 family.

The polypeptide is Small ribosomal subunit protein uS9 (Bacillus pumilus (strain SAFR-032)).